A 509-amino-acid polypeptide reads, in one-letter code: Scavenger receptor class B member 1 (509 aa).

The Cytoplasmic segment spans residues 1–11 (MGGSSRARWVA). Residues 12-32 (LGLGALGLLFAALGVVMILMV) traverse the membrane as a helical segment. The Extracellular portion of the chain corresponds to 33–440 (PSLIKQQVLK…YTQLVLMPQV (408 aa)). Residues Asn102, Asn108, Asn116, Asn173, Asn212, Asn227, Asn255, Asn288, Asn310, Asn330, and Asn383 are each glycosylated (N-linked (GlcNAc...) asparagine). Cys251 and Cys384 form a disulfide bridge. A helical membrane pass occupies residues 441 to 461 (LHYAQYVLLGLGGLLLLVPII). Cys462 carries S-palmitoyl cysteine lipidation. Residues 462–509 (CQLRSQEKCFLFWSGSKKGSQDKEAIQAYSESLMSPAAKGTVLQEAKL) lie on the Cytoplasmic side of the membrane.

The protein belongs to the CD36 family. The C-terminal region binds to PDZK1. Post-translationally, N-glycosylated. The six cysteines of the extracellular domain are all involved in intramolecular disulfide bonds. Expressed primarily in liver, ovary and adrenal gland, and, at lower levels in other non-placental steroidogenic tissues, including adipose tissue, mammary gland and testis (at protein level). Isoform 2 is expressed at lower levels than isoform 1 in liver, testis and adrenal gland. At the mRNA, but not at the protein level, isoform 2 is the predominant isoform in testis (80%).

The protein localises to the cell membrane. It localises to the membrane. It is found in the caveola. In terms of biological role, receptor for different ligands such as phospholipids, cholesterol ester, lipoproteins, phosphatidylserine and apoptotic cells. Both isoform 1 and isoform 2 act as receptors for HDL, mediating selective uptake of cholesteryl ether and HDL-dependent cholesterol efflux. Also facilitates the flux of free and esterified cholesterol between the cell surface and apoB-containing lipoproteins and modified lipoproteins, although less efficiently than HDL. May be involved in the phagocytosis of apoptotic cells, via its phosphatidylserine binding activity. This is Scavenger receptor class B member 1 (Scarb1) from Mus musculus (Mouse).